A 160-amino-acid polypeptide reads, in one-letter code: Xanthine-guanine phosphoribosyltransferase (160 aa).

5-phospho-alpha-D-ribose 1-diphosphate is bound by residues 41-42 (RG) and 93-101 (DDLVDTGRT). Asp94 is a binding site for Mg(2+). The guanine site is built by Asp97 and Ile140. Xanthine is bound by residues Asp97 and Ile140. Residues 97 to 101 (DTGRT) and 139 to 140 (WI) contribute to the GMP site.

It belongs to the purine/pyrimidine phosphoribosyltransferase family. XGPT subfamily. In terms of assembly, homotetramer. Mg(2+) serves as cofactor.

It localises to the cell inner membrane. The enzyme catalyses GMP + diphosphate = guanine + 5-phospho-alpha-D-ribose 1-diphosphate. The catalysed reaction is XMP + diphosphate = xanthine + 5-phospho-alpha-D-ribose 1-diphosphate. It catalyses the reaction IMP + diphosphate = hypoxanthine + 5-phospho-alpha-D-ribose 1-diphosphate. Its pathway is purine metabolism; GMP biosynthesis via salvage pathway; GMP from guanine: step 1/1. The protein operates within purine metabolism; XMP biosynthesis via salvage pathway; XMP from xanthine: step 1/1. Purine salvage pathway enzyme that catalyzes the transfer of the ribosyl-5-phosphate group from 5-phospho-alpha-D-ribose 1-diphosphate (PRPP) to the N9 position of the 6-oxopurines guanine and xanthine to form the corresponding ribonucleotides GMP (guanosine 5'-monophosphate) and XMP (xanthosine 5'-monophosphate), with the release of PPi. To a lesser extent, also acts on hypoxanthine. In Desulfotalea psychrophila (strain LSv54 / DSM 12343), this protein is Xanthine-guanine phosphoribosyltransferase.